Here is a 537-residue protein sequence, read N- to C-terminus: Multidrug resistance protein Stp (537 aa).

The next 14 helical transmembrane spans lie at 6 to 26, 46 to 66, 77 to 97, 104 to 124, 136 to 156, 163 to 183, 200 to 220, 223 to 243, 262 to 282, 300 to 320, 327 to 347, 352 to 372, 397 to 417, and 478 to 498; these read LLTL…ALIV, WVVA…ATLA, IGVS…SIAV, AQGL…SAAF, IWTA…GLLV, SIFY…LCYV, LLFI…PQIG, SVQT…FVWL, YALA…MLLL, LMIL…GHLV, VPIL…IFSE, ALVL…LTPI, AIGS…WLSA, and VALL…WRWF.

It belongs to the major facilitator superfamily. EmrB family.

Its subcellular location is the cell membrane. Contributes to spectinomycin and tetracycline resistance. The protein is Multidrug resistance protein Stp (stp) of Mycobacterium tuberculosis (strain ATCC 25618 / H37Rv).